The primary structure comprises 173 residues: Alpha-crystallin A chain (173 aa).

The residue at position 1 (Met-1) is an N-acetylmethionine. The tract at residues 1–63 (MDVTIQHPWF…RTVLDSGISE (63 aa)) is required for complex formation with BFSP1 and BFSP2. Position 6 is a deamidated glutamine; partial (Gln-6). Ser-45 carries the phosphoserine modification. Deamidated glutamine; partial is present on Gln-50. In terms of domain architecture, sHSP spans 52-162 (LFRTVLDSGI…GHSERAIPVS (111 aa)). Lys-99 is modified (N6-acetyllysine). Residue His-100 coordinates Zn(2+). Asn-101 bears the Deamidated asparagine; partial mark. Positions 102 and 107 each coordinate Zn(2+). Ser-122 carries the phosphoserine modification. Deamidated asparagine; partial is present on Asn-123. Cysteines 131 and 142 form a disulfide. Residues 146–173 (VQSSMDDGHSERAIPVSREEKPSSVPSS) form a disordered region. Position 147 is a deamidated glutamine; partial (Gln-147). Over residues 151–167 (DDGHSERAIPVSREEKP) the composition is skewed to basic and acidic residues. His-154 contacts Zn(2+). An O-linked (GlcNAc) serine glycan is attached at Ser-162.

It belongs to the small heat shock protein (HSP20) family. As to quaternary structure, heteromer composed of three CRYAA and one CRYAB subunits. Inter-subunit bridging via zinc ions enhances stability, which is crucial as there is no protein turn over in the lens. Can also form homodimers and homotetramers (dimers of dimers) which serve as the building blocks of homooligomers. Within homooligomers, the zinc-binding motif is created from residues of 3 different molecules. His-100 and Glu-102 from one molecule are ligands of the zinc ion, and His-107 and His-154 residues from additional molecules complete the site with tetrahedral coordination geometry. Part of a complex required for lens intermediate filament formation composed of BFSP1, BFSP2 and CRYAA. Post-translationally, undergoes age-dependent proteolytical cleavage at the C-terminus.

The protein resides in the cytoplasm. Its subcellular location is the nucleus. Functionally, contributes to the transparency and refractive index of the lens. In its oxidized form (absence of intramolecular disulfide bond), acts as a chaperone, preventing aggregation of various proteins under a wide range of stress conditions. Required for the correct formation of lens intermediate filaments as part of a complex composed of BFSP1, BFSP2 and CRYAA. The chain is Alpha-crystallin A chain (CRYAA) from Orycteropus afer (Aardvark).